A 975-amino-acid chain; its full sequence is Protein HIRA (975 aa).

WD repeat units follow at residues 10-50 (RHEG…KDND), 64-103 (DHFGTVNCVRWAHHGRYLASGSDDQVIQIHERKAGTGTSE), 123-162 (GHTADVVDLNWSPDDSTLASGSLDNTVHIWSMANGICTAV), 165-204 (GHSSLVKGVTWDPIGSFIASQSDDKTVIIWRTSDWSLAHR), 214-256 (GSTF…ATFD), 259-331 (GHNA…PLFV), and 335-374 (FFTQSVVDLSWSPDGYSLFACSLDGSVATFHFEAKELGYR). Positions 418 to 433 (KKVSSVQQFQSPPKVS) are enriched in low complexity. Disordered stretches follow at residues 418–510 (KKVS…RSQN) and 948–975 (NVEQMDVTPTPPPPPPAAATEGNNNGAS). A compositionally biased stretch (polar residues) spans 435 to 445 (DAPNPSTSVPN). Positions 478 to 492 (KQREYRRPDGRKRII) are enriched in basic and acidic residues. Residues 499–510 (PSNQDMSNRSQN) are compositionally biased toward polar residues. Positions 923–954 (ATNRKVQRLLNEFMDLLSEYEAAETNVEQMDV) form a coiled coil.

The protein belongs to the WD repeat HIR1 family.

Its subcellular location is the nucleus. Functionally, histone chaperone involved in maintining knox genes silencing throughout leaf development. This Oryza sativa subsp. japonica (Rice) protein is Protein HIRA.